The primary structure comprises 319 residues: Ribosomal RNA small subunit methyltransferase H (319 aa).

Residues 38–40 (GGH), Asp58, Phe82, Asp104, and Gln111 each bind S-adenosyl-L-methionine.

The protein belongs to the methyltransferase superfamily. RsmH family.

Its subcellular location is the cytoplasm. It carries out the reaction cytidine(1402) in 16S rRNA + S-adenosyl-L-methionine = N(4)-methylcytidine(1402) in 16S rRNA + S-adenosyl-L-homocysteine + H(+). Functionally, specifically methylates the N4 position of cytidine in position 1402 (C1402) of 16S rRNA. This chain is Ribosomal RNA small subunit methyltransferase H, found in Histophilus somni (strain 129Pt) (Haemophilus somnus).